We begin with the raw amino-acid sequence, 148 residues long: Large ribosomal subunit protein bL9 (148 aa).

It belongs to the bacterial ribosomal protein bL9 family.

In terms of biological role, binds to the 23S rRNA. This Staphylococcus saprophyticus subsp. saprophyticus (strain ATCC 15305 / DSM 20229 / NCIMB 8711 / NCTC 7292 / S-41) protein is Large ribosomal subunit protein bL9.